We begin with the raw amino-acid sequence, 288 residues long: uncharacterized protein (288 aa).

This is an uncharacterized protein from Methanocaldococcus jannaschii (strain ATCC 43067 / DSM 2661 / JAL-1 / JCM 10045 / NBRC 100440) (Methanococcus jannaschii).